Here is a 465-residue protein sequence, read N- to C-terminus: Gamma-aminobutyric acid receptor subunit rho-2 (465 aa).

The N-terminal stretch at 1–20 (MPYFSRLILFLFCLVVLVES) is a signal peptide. Residues 21 to 260 (RKPKKRRWTG…LYINFTLRRH (240 aa)) lie on the Extracellular side of the membrane. A 4-aminobutanoate-binding site is contributed by R105. A glycan (N-linked (GlcNAc...) asparagine) is linked at N120. Position 169 (S169) interacts with 4-aminobutanoate. C178 and C192 are joined by a disulfide. A 4-aminobutanoate-binding site is contributed by E197. N254 carries an N-linked (GlcNAc...) asparagine glycan. Residues 261–281 (IFFFLLQTYFPATLMVMLSWV) traverse the membrane as a helical segment. Residues 282-293 (SFWIDRRAVPAR) lie on the Cytoplasmic side of the membrane. The helical transmembrane segment at 294-314 (VSLGITTVLTMSTIITGVNAS) threads the bilayer. At 315-325 (MPRVSYIKAVD) the chain is on the extracellular side. The helical transmembrane segment at 326 to 346 (IYLWVSFVFVFLSVLEYAAVN) threads the bilayer. The Cytoplasmic portion of the chain corresponds to 347 to 444 (YLTTVQERKE…FQNTHAIDKY (98 aa)). The chain crosses the membrane as a helical span at residues 445-465 (SRLIFPASYIFFNLIYWSVFA).

Belongs to the ligand-gated ion channel (TC 1.A.9) family. Gamma-aminobutyric acid receptor (TC 1.A.9.5) subfamily. GABRR2 sub-subfamily. Three rho subunits (rho-1/GBRR1, rho-2/GBRR2 and rho-3/GBRR3) coassemble either to form functional homopentamers or heteropentamers. Rho-2 is unable to form a functional homopentamer. Interacts with SQSTM1.

The protein resides in the postsynaptic cell membrane. It is found in the cell membrane. The enzyme catalyses chloride(in) = chloride(out). Functionally, rho subunit of the pentameric ligand-gated chloride channels responsible for mediating the effects of gamma-aminobutyric acid (GABA), the major inhibitory neurotransmitter in the brain. Rho-containing GABA-gated chloride channels are a subclass of GABA(A) receptors (GABAARs) entirely composed of rho subunits, where GABA molecules bind at the rho intersubunit interfaces. When activated by GABA, rho-GABAARs selectively allow the flow of chloride anions across the cell membrane down their electrochemical gradient. Rho-2 GABAARs may contribute to the regulation of glial development in the cerebellum by controlling extrasynaptic transmission. Rho-2 GABAARs are also involved in neuronal tonic (extrasynaptic) and phasic (synaptic) transmission in the Purkinje neurons of the cerebellum. Rho-2 GABAARs expressed in retina may play a role in retinal neurotransmission. The sequence is that of Gamma-aminobutyric acid receptor subunit rho-2 (GABRR2) from Bos taurus (Bovine).